A 502-amino-acid chain; its full sequence is Lysine--tRNA ligase (502 aa).

Mg(2+)-binding residues include Glu413 and Glu420.

This sequence belongs to the class-II aminoacyl-tRNA synthetase family. As to quaternary structure, homodimer. Requires Mg(2+) as cofactor.

The protein resides in the cytoplasm. The enzyme catalyses tRNA(Lys) + L-lysine + ATP = L-lysyl-tRNA(Lys) + AMP + diphosphate. The protein is Lysine--tRNA ligase of Haemophilus influenzae (strain 86-028NP).